Here is a 1215-residue protein sequence, read N- to C-terminus: MPGGVNAVYMGLCYNCGGNIDEDRLEKGLPCARCLPSPPRRATPLTVYRALKKAGTLGAYSWEYLSIREVERFEAYFAAKSGSRLWSAQRSWAKRLVKGDSFAIIAPTGVGKSTLLTVYAAYVAAVKRGRVLYLVPTENLVRQVYAKLDQVEPGIATAYYSRMPAKARESSLEKIASGGARLIVATTGFLSRRFDLLHPQYKFDLAIVDDVDSLLRNSRNVERILLLTGFSEETVEAAHSLVKARLKLYRALHSGASESIVSRLEQEIAQLEARLRLSLSEASPGQLVIASATGRPRGVKHLLFKELLGFEVGGGSDYLRNIVDAYVVDSDPVGRTAEIVSALGDGVIVFVSQRLGKDVARAIAGRLEGMGVSTALALTGARRPVEAFARGEARVLIGMASRYGVIVRGLDLPERSKYAVFLGAPSAKTHLLEALYSPRRMLAFLSIAQEKGVEWAGEAFRRLSRLLEKVIDTSIVSLAARGKLEAQGPAGEAAGIISETAPRLVDWLVAEARLQGGLLRVGGLVVDARGPIPYLVVPDAPTYIQASGRVSRLYRGVMTRGLSIVVDEAPEYVEALGERLKWTTSSRLRPLSEVDMEKLRREIEESRRGKGRRVRVKTTLLVVESPTKARTIAWFWGRPGKRRIGRSVIYEASVSDPETGDVHILQITSTRGHLTDLTTDSVGSKYGVDEDGGGYRAYYSTIKRCLDCGAQHTSSSPFCPRCGSPRQVDSKSVVEILRKLASEVDEIVIATDPDREGEKIAWDVFLAVRPYNPNVRRGRFHEVTPRAVIEALRSGESVEKSLIEAQKVRRIVDRWIGFHLSTHLKLKFSKPWLGAGRVQTPVLGWIVDRYREWQDTRGYLVIFKLSSGGRTSYFTQNRLEVENLKRVEWLEVVDIAGKTEERNPPPPYTTDEYLYDASRKLGLSAGLAMKIAQDLFESGLITYHRTDSTRVSPTGVKLALEYLASRGLEGEAQPRGWGEGGAHEAIRPVRPIDAQDLERAVLSGSIRIPIRLTRLHIRVYDMIFRRFIASQMKPATLDIVEATLQAGETVFNHAGVARVRGGYALVNPPRVEEWLARLSPGDRIDVEDVLVVKSSLKRLYRAGDIVKMMREHGIGRPSTYAKAIEQNRRHGYVIESKKMRYLIPTKTGVSIYDYLSNGFKKLVSVDTTRRLEEALERVEKGVEKPEAVLASVWRMVDEAVSLHAATGDVMGQSEA.

The RG N-terminal-type zinc finger occupies 3–44 (GGVNAVYMGLCYNCGGNIDEDRLEKGLPCARCLPSPPRRATP). Zn(2+) contacts are provided by C13, C16, C31, and C34. ATP contacts are provided by residues Q89 and 106-113 (APTGVGKS). The region spanning 93–249 (AKRLVKGDSF…SLVKARLKLY (157 aa)) is the Helicase ATP-binding domain. A DEAD box motif is present at residues 209–212 (DDVD). A topoisomerase I region spans residues 614-1215 (VRVKTTLLVV…TGDVMGQSEA (602 aa)). The Toprim domain maps to 618 to 783 (TTLLVVESPT…NVRRGRFHEV (166 aa)). Mg(2+) is bound at residue E624. Residues 702–729 (IKRCLDCGAQHTSSSPFCPRCGSPRQVD) form an RG C-terminal-type zinc finger. Zn(2+) is bound by residues C705, C708, C719, and C722. D752 serves as a coordination point for Mg(2+). Residues 799–1200 (EKSLIEAQKV…SVWRMVDEAV (402 aa)) form the Topo IA-type catalytic domain. Y943 functions as the O-(5'-phospho-DNA)-tyrosine intermediate in the catalytic mechanism.

In the N-terminal section; belongs to the DEAD box helicase family. DDVD subfamily. This sequence in the C-terminal section; belongs to the type IA topoisomerase family. In terms of assembly, monomer. Zn(2+) is required as a cofactor. It depends on Mg(2+) as a cofactor.

It localises to the cytoplasm. It carries out the reaction ATP + H2O = ADP + phosphate + H(+). Functionally, modifies the topological state of DNA by introducing positive supercoils in an ATP-dependent process, increasing the linking number in steps of +1. Binds to single-stranded DNA, transiently cleaves and then rejoins the ends, introducing a positive supercoil in the process. The scissile phosphodiester is attacked by the catalytic tyrosine of the enzyme, resulting in the formation of a DNA-(5'-phosphotyrosyl)-enzyme intermediate. Probably involved in rewinding DNA strands in regions of the chromosome that have opened up to allow replication, transcription, DNA repair and/or for DNA protection. This is Reverse gyrase 2 from Aeropyrum pernix (strain ATCC 700893 / DSM 11879 / JCM 9820 / NBRC 100138 / K1).